The chain runs to 179 residues: Replication restart protein DnaT (179 aa).

The segment covering 151-168 (SRSSNGGMPQRDINSVSE) has biased composition (polar residues). The segment at 151–179 (SRSSNGGMPQRDINSVSEPDNHIPPGFRG) is disordered.

This sequence belongs to the DnaT family. In terms of assembly, homooligomerizes. Interacts with PriB. Component of the replication restart primosome. Primosome assembly occurs via a 'hand-off' mechanism. PriA binds to replication forks, subsequently PriB then DnaT bind; DnaT then displaces ssDNA to generate the helicase loading substrate.

In terms of biological role, involved in the restart of stalled replication forks, which reloads the replicative helicase on sites other than the origin of replication. Can function in multiple replication restart pathways. Displaces ssDNA from a PriB-ssDNA complex. Probably forms a spiral filament on ssDNA. This is Replication restart protein DnaT from Salmonella schwarzengrund (strain CVM19633).